Reading from the N-terminus, the 178-residue chain is Bifunctional protein PyrR (178 aa).

A PRPP-binding motif is present at residues 99–111 (IILVDDVLFTGRT).

The protein belongs to the purine/pyrimidine phosphoribosyltransferase family. PyrR subfamily. As to quaternary structure, homodimer and homohexamer; in equilibrium.

The enzyme catalyses UMP + diphosphate = 5-phospho-alpha-D-ribose 1-diphosphate + uracil. Regulates transcriptional attenuation of the pyrimidine nucleotide (pyr) operon by binding in a uridine-dependent manner to specific sites on pyr mRNA. This disrupts an antiterminator hairpin in the RNA and favors formation of a downstream transcription terminator, leading to a reduced expression of downstream genes. Its function is as follows. Also displays a weak uracil phosphoribosyltransferase activity which is not physiologically significant. This is Bifunctional protein PyrR from Clostridium novyi (strain NT).